Reading from the N-terminus, the 120-residue chain is Large ribosomal subunit protein eL34x (120 aa).

Residues 31–50 form a disordered region; it reads TYQTTNKRASGPKCPVTGKR.

Belongs to the eukaryotic ribosomal protein eL34 family.

The sequence is that of Large ribosomal subunit protein eL34x (RPL34C) from Arabidopsis thaliana (Mouse-ear cress).